The primary structure comprises 297 residues: MNDLIEDFLHFLIVERGLSANTIKAYERDLRYFVSYMDVAKGLTDPNTLERSDIVGFMAFARQEGKSARSVARYIASLRSFFHYLMHDGKMSHDPMIQIETPKQAQGLPKVLNLDDVEKLLSSSDTSTPLGLRDQAMMEILYATGLRVTELVSLKMDDLHLHMGFIQTIGKGDKERIIPLGKTATTVLEKYLEEARPKLRRPKYRNDFVFLNHHGQGLTRQGFWKILKGIAKESGIEKPITPHTLRHSFATHLLENGADLRSVQELLGHADISTTQIYTHVTKLRLKDVYKQFHPRA.

The Core-binding (CB) domain occupies 1–86 (MNDLIEDFLH…SLRSFFHYLM (86 aa)). One can recognise a Tyr recombinase domain in the interval 107-291 (GLPKVLNLDD…TKLRLKDVYK (185 aa)). Catalysis depends on residues R147, K171, H243, R246, and H269. The active-site O-(3'-phospho-DNA)-tyrosine intermediate is Y278.

Belongs to the 'phage' integrase family. XerD subfamily. In terms of assembly, forms a cyclic heterotetrameric complex composed of two molecules of XerC and two molecules of XerD.

The protein localises to the cytoplasm. Site-specific tyrosine recombinase, which acts by catalyzing the cutting and rejoining of the recombining DNA molecules. The XerC-XerD complex is essential to convert dimers of the bacterial chromosome into monomers to permit their segregation at cell division. It also contributes to the segregational stability of plasmids. The polypeptide is Tyrosine recombinase XerD (Listeria monocytogenes serotype 4b (strain F2365)).